A 334-amino-acid chain; its full sequence is Cytoskeleton protein RodZ (334 aa).

The Cytoplasmic portion of the chain corresponds to 1–111 (MNTEATHDQN…LGKRRKKRDG (111 aa)). The region spanning 19-71 (LRNAREQLGLSQQAVAERLCLKVSTVRDIEEDKAPSDLASTFLRGYIRSYARL) is the HTH cro/C1-type domain. The segment at residues 30–49 (QQAVAERLCLKVSTVRDIEE) is a DNA-binding region (H-T-H motif). The helical; Signal-anchor for type II membrane protein transmembrane segment at 112 to 132 (WLMSFTWLVLFVVVGLTGAWW) threads the bilayer. At 133–334 (WQNHKAQQEE…TLNAEPTPAQ (202 aa)) the chain is on the periplasmic side. A disordered region spans residues 155–241 (NADKDSGQSV…PSALPTSQAG (87 aa)). The segment covering 161–175 (GQSVPLDTGAVTSQD) has biased composition (polar residues). 2 stretches are compositionally biased toward low complexity: residues 176-211 (TTPA…TVVA) and 219-241 (TAAT…SQAG).

It belongs to the RodZ family.

Its subcellular location is the cell inner membrane. Functionally, cytoskeletal protein that is involved in cell-shape control through regulation of the length of the long axis. This chain is Cytoskeleton protein RodZ, found in Salmonella dublin (strain CT_02021853).